Consider the following 143-residue polypeptide: D-aminoacyl-tRNA deacylase (143 aa).

The Gly-cisPro motif, important for rejection of L-amino acids signature appears at 135–136 (GP).

This sequence belongs to the DTD family. As to quaternary structure, homodimer.

The protein resides in the cytoplasm. It carries out the reaction glycyl-tRNA(Ala) + H2O = tRNA(Ala) + glycine + H(+). The catalysed reaction is a D-aminoacyl-tRNA + H2O = a tRNA + a D-alpha-amino acid + H(+). An aminoacyl-tRNA editing enzyme that deacylates mischarged D-aminoacyl-tRNAs. Also deacylates mischarged glycyl-tRNA(Ala), protecting cells against glycine mischarging by AlaRS. Acts via tRNA-based rather than protein-based catalysis; rejects L-amino acids rather than detecting D-amino acids in the active site. By recycling D-aminoacyl-tRNA to D-amino acids and free tRNA molecules, this enzyme counteracts the toxicity associated with the formation of D-aminoacyl-tRNA entities in vivo and helps enforce protein L-homochirality. This is D-aminoacyl-tRNA deacylase from Mycolicibacterium gilvum (strain PYR-GCK) (Mycobacterium gilvum (strain PYR-GCK)).